The primary structure comprises 272 residues: Phosphoglycolate phosphatase (272 aa).

Residue Asp-19 is the Nucleophile of the active site. The Mg(2+) site is built by Asp-19, Asp-21, and Asp-182.

This sequence belongs to the HAD-like hydrolase superfamily. CbbY/CbbZ/Gph/YieH family. It depends on Mg(2+) as a cofactor.

It carries out the reaction 2-phosphoglycolate + H2O = glycolate + phosphate. It functions in the pathway organic acid metabolism; glycolate biosynthesis; glycolate from 2-phosphoglycolate: step 1/1. In terms of biological role, specifically catalyzes the dephosphorylation of 2-phosphoglycolate. Is involved in the dissimilation of the intracellular 2-phosphoglycolate formed during the DNA repair of 3'-phosphoglycolate ends, a major class of DNA lesions induced by oxidative stress. The sequence is that of Phosphoglycolate phosphatase from Pseudomonas savastanoi pv. phaseolicola (strain 1448A / Race 6) (Pseudomonas syringae pv. phaseolicola (strain 1448A / Race 6)).